A 488-amino-acid polypeptide reads, in one-letter code: Probable glycine dehydrogenase (decarboxylating) subunit 2 (488 aa).

K274 bears the N6-(pyridoxal phosphate)lysine mark.

The protein belongs to the GcvP family. C-terminal subunit subfamily. In terms of assembly, the glycine cleavage system is composed of four proteins: P, T, L and H. In this organism, the P 'protein' is a heterodimer of two subunits. Requires pyridoxal 5'-phosphate as cofactor.

The catalysed reaction is N(6)-[(R)-lipoyl]-L-lysyl-[glycine-cleavage complex H protein] + glycine + H(+) = N(6)-[(R)-S(8)-aminomethyldihydrolipoyl]-L-lysyl-[glycine-cleavage complex H protein] + CO2. Functionally, the glycine cleavage system catalyzes the degradation of glycine. The P protein binds the alpha-amino group of glycine through its pyridoxal phosphate cofactor; CO(2) is released and the remaining methylamine moiety is then transferred to the lipoamide cofactor of the H protein. The protein is Probable glycine dehydrogenase (decarboxylating) subunit 2 of Listeria innocua serovar 6a (strain ATCC BAA-680 / CLIP 11262).